The primary structure comprises 583 residues: Aspartate--tRNA ligase (583 aa).

Residue Glu169 participates in L-aspartate binding. The interval 193–196 (QLFK) is aspartate. Arg215 is an L-aspartate binding site. ATP contacts are provided by residues 215 to 217 (RDE) and Gln224. Position 443 (His443) interacts with L-aspartate. Residue Glu477 participates in ATP binding. Arg484 contributes to the L-aspartate binding site. 529-532 (GIDR) is an ATP binding site.

It belongs to the class-II aminoacyl-tRNA synthetase family. Type 1 subfamily. Homodimer.

Its subcellular location is the cytoplasm. It catalyses the reaction tRNA(Asp) + L-aspartate + ATP = L-aspartyl-tRNA(Asp) + AMP + diphosphate. Functionally, catalyzes the attachment of L-aspartate to tRNA(Asp) in a two-step reaction: L-aspartate is first activated by ATP to form Asp-AMP and then transferred to the acceptor end of tRNA(Asp). The protein is Aspartate--tRNA ligase of Stenotrophomonas maltophilia (strain K279a).